The following is a 181-amino-acid chain: Coatomer subunit zeta-3 (181 aa).

The protein belongs to the adaptor complexes small subunit family. Oligomeric complex that consists of at least the alpha, beta, beta', gamma, delta, epsilon and zeta subunits.

Its subcellular location is the cytoplasm. It localises to the golgi apparatus membrane. The protein resides in the cytoplasmic vesicle. The protein localises to the COPI-coated vesicle membrane. In terms of biological role, the coatomer is a cytosolic protein complex that binds to dilysine motifs and reversibly associates with Golgi non-clathrin-coated vesicles, which further mediate biosynthetic protein transport from the ER, via the Golgi up to the trans Golgi network. Coatomer complex is required for budding from Golgi membranes, and is essential for the retrograde Golgi-to-ER transport of dilysine-tagged proteins. The zeta subunit may be involved in regulating the coat assembly and, hence, the rate of biosynthetic protein transport due to its association-dissociation properties with the coatomer complex. The sequence is that of Coatomer subunit zeta-3 from Arabidopsis thaliana (Mouse-ear cress).